Here is a 102-residue protein sequence, read N- to C-terminus: Large ribosomal subunit protein bL21 (102 aa).

The protein belongs to the bacterial ribosomal protein bL21 family. In terms of assembly, part of the 50S ribosomal subunit. Contacts protein L20.

Functionally, this protein binds to 23S rRNA in the presence of protein L20. The polypeptide is Large ribosomal subunit protein bL21 (Ehrlichia chaffeensis (strain ATCC CRL-10679 / Arkansas)).